Here is a 558-residue protein sequence, read N- to C-terminus: Protein NRT1/ PTR FAMILY 2.7 (558 aa).

The next 12 helical transmembrane spans lie at 31-51 (FMIA…LNLI), 63-83 (IAAA…PAVA), 90-110 (FFGT…GVAL), 140-162 (LGVL…FTLA), 178-198 (FFNW…TAIV), 204-224 (ISWT…FLVF), 319-339 (IIPL…QLSL), 357-377 (IPAG…IIVN), 399-419 (VGIG…VEAK), 440-460 (VLWL…HFPG), 479-499 (SITS…IDLI), and 518-538 (VYWI…VCSW).

It belongs to the major facilitator superfamily. Proton-dependent oligopeptide transporter (POT/PTR) (TC 2.A.17) family. Expressed in shoots and in the cortex of mature roots. Not expressed in root tip meristematic cells.

It localises to the cell membrane. Transporter involved in a passive nitrate efflux. Not competent for chloride transport. This is Protein NRT1/ PTR FAMILY 2.7 (NPF2.7) from Arabidopsis thaliana (Mouse-ear cress).